Consider the following 520-residue polypeptide: GMP synthase [glutamine-hydrolyzing] (520 aa).

Residues 9–202 (TILIIDFGSQ…VHRIVGVKPG (194 aa)) enclose the Glutamine amidotransferase type-1 domain. Cysteine 86 serves as the catalytic Nucleophile. Active-site residues include histidine 176 and glutamate 178. The region spanning 203-395 (WTMGAYREQA…LGLPDSFIGR (193 aa)) is the GMPS ATP-PPase domain. ATP is bound at residue 230–236 (SGGVDSS).

Homodimer.

The enzyme catalyses XMP + L-glutamine + ATP + H2O = GMP + L-glutamate + AMP + diphosphate + 2 H(+). It functions in the pathway purine metabolism; GMP biosynthesis; GMP from XMP (L-Gln route): step 1/1. Its function is as follows. Catalyzes the synthesis of GMP from XMP. The protein is GMP synthase [glutamine-hydrolyzing] of Brucella abortus (strain S19).